We begin with the raw amino-acid sequence, 354 residues long: Fructose-bisphosphate aldolase (354 aa).

D-glyceraldehyde 3-phosphate is bound at residue Ser50. The active-site Proton donor is Asp83. Zn(2+) contacts are provided by His84, Asp105, Glu142, and His198. Gly199 contributes to the dihydroxyacetone phosphate binding site. A Zn(2+)-binding site is contributed by His232. Dihydroxyacetone phosphate-binding positions include 233–235 and 275–278; these read GSS and NIDT.

This sequence belongs to the class II fructose-bisphosphate aldolase family. The cofactor is Zn(2+).

The enzyme catalyses beta-D-fructose 1,6-bisphosphate = D-glyceraldehyde 3-phosphate + dihydroxyacetone phosphate. Its pathway is carbohydrate degradation; glycolysis; D-glyceraldehyde 3-phosphate and glycerone phosphate from D-glucose: step 4/4. Its function is as follows. Catalyzes the aldol condensation of dihydroxyacetone phosphate (DHAP or glycerone-phosphate) with glyceraldehyde 3-phosphate (G3P) to form fructose 1,6-bisphosphate (FBP) in gluconeogenesis and the reverse reaction in glycolysis. The polypeptide is Fructose-bisphosphate aldolase (fba) (Pseudomonas aeruginosa (strain ATCC 15692 / DSM 22644 / CIP 104116 / JCM 14847 / LMG 12228 / 1C / PRS 101 / PAO1)).